Here is a 971-residue protein sequence, read N- to C-terminus: Dynamin-like GTPase OPA1, mitochondrial (971 aa).

Residues 1-89 (MLRVGRAVAC…GGWRYQQHRS (89 aa)) constitute a mitochondrion transit peptide. At 90-98 (FWMLRLASR) the chain is on the mitochondrial matrix side. Residues 99 to 115 (LLKLRYIVLGSAVGGGY) form a helical membrane-spanning segment. Over 116–781 (TAKKTYEEWK…SVINDMVGPD (666 aa)) the chain is Mitochondrial intermembrane. Residues 204–224 (EAPVTATPEASDKQFKKSSDK) are disordered. Basic and acidic residues predominate over residues 213–224 (ASDKQFKKSSDK). Positions 219 to 265 (KKSSDKEKVDQLQEELLRTQMKYQRMLERLEKENKDLRKVVLQKDEK) form a coiled coil. Positions 297 to 572 (QDHLPRVVVV…FWKMVRESVE (276 aa)) constitute a Dynamin-type G domain. The segment at 307 to 314 (GDQSAGKT) is G1 motif. 6 residues coordinate GTP: S310, G312, K313, T314, S315, and G329. Position 314 (T314) interacts with Mg(2+). The G2 motif stretch occupies residues 333 to 336 (MMTR). Mg(2+) is bound by residues T335 and D410. The segment at 410–413 (DLPG) is G3 motif. The segment at 478–481 (TKVD) is G4 motif. Positions 479, 481, and 514 each coordinate GTP. The tract at residues 512–515 (VVTG) is G5 motif. Stalk region stretches follow at residues 600–847 (DRNE…IKDT) and 885–939 (CNDV…VHLI). A paddle region region spans residues 747–867 (TDKPQWDAAI…QKALQHCNLC (121 aa)). The stretch at 782-792 (WKQRWMSWKNR) is an intramembrane region. Residues 793 to 971 (SPEQHTRNET…AFIEALHKEK (179 aa)) lie on the Mitochondrial intermembrane side of the membrane. C867 and C885 are disulfide-bonded. Residues 906–971 (RQQLTNTEVR…AFIEALHKEK (66 aa)) are a coiled coil.

This sequence belongs to the TRAFAC class dynamin-like GTPase superfamily. Dynamin/Fzo/YdjA family. In terms of assembly, oligomeric complex consisting of membrane-bound and soluble forms of OPA1. Post-translationally, cleaved by OMA1 or YME1L downstream of the transmembrane region in response to different signals to generate soluble forms. Cleaved by OMA1 at position S1 following stress conditions, generating the short soluble form (Dynamin-like GTPase OPA1, short form; S-OPA1). In terms of tissue distribution, strongly expressed in the brain, ovary and skeletal muscle. In the brain, expression of the mRNA was observed specifically in motor neurons, in nucleus oculomotorius, in nucleus valvulae lateralis, in the medulla oblongata and in the spinal cord.

It is found in the mitochondrion inner membrane. Its subcellular location is the mitochondrion intermembrane space. It catalyses the reaction GTP + H2O = GDP + phosphate + H(+). Dynamin-related GTPase that is essential for normal mitochondrial morphology by mediating fusion of the mitochondrial inner membranes, regulating cristae morphology and maintaining respiratory chain function. Exists in two forms: the transmembrane, long form (Dynamin-like GTPase OPA1, long form; L-OPA1), which is tethered to the inner mitochondrial membrane, and the short soluble form (Dynamin-like GTPase OPA1, short form; S-OPA1), which results from proteolytic cleavage and localizes in the intermembrane space. Both forms (L-OPA1 and S-OPA1) cooperate to catalyze the fusion of the mitochondrial inner membrane. The equilibrium between L-OPA1 and S-OPA1 is essential: excess levels of S-OPA1, produced by cleavage by OMA1 following loss of mitochondrial membrane potential, lead to an impaired equilibrium between L-OPA1 and S-OPA1, inhibiting mitochondrial fusion. The balance between L-OPA1 and S-OPA1 also influences cristae shape and morphology. Its role in mitochondrial morphology is required for mitochondrial genome maintenance. Functionally, constitutes the transmembrane long form (L-OPA1) that plays a central role in mitochondrial inner membrane fusion and cristae morphology. L-OPA1 and the soluble short form (S-OPA1) form higher-order helical assemblies that coordinate the fusion of mitochondrial inner membranes. Inner membrane-anchored L-OPA1 molecules initiate membrane remodeling by recruiting soluble S-OPA1 to rapidly polymerize into a flexible cylindrical scaffold encaging the mitochondrial inner membrane. Once at the membrane surface, the formation of S-OPA1 helices induce bilayer curvature. OPA1 dimerization through the paddle region, which inserts into cardiolipin-containing membrane, promotes GTP hydrolysis and the helical assembly of a flexible OPA1 lattice on the membrane, which drives membrane curvature and mitochondrial fusion. Plays a role in the maintenance and remodeling of mitochondrial cristae, some invaginations of the mitochondrial inner membrane that provide an increase in the surface area. Probably acts by forming helical filaments at the inside of inner membrane tubes with the shape and dimensions of crista junctions. In terms of biological role, constitutes the soluble short form (S-OPA1) generated by cleavage by OMA1, which plays a central role in mitochondrial inner membrane fusion and cristae morphology. The transmembrane long form (L-OPA1) and the S-OPA1 form higher-order helical assemblies that coordinate the fusion of mitochondrial inner membranes. Inner membrane-anchored L-OPA1 molecules initiate membrane remodeling by recruiting soluble S-OPA1 to rapidly polymerize into a flexible cylindrical scaffold encaging the mitochondrial inner membrane. Once at the membrane surface, the formation of S-OPA1 helices induce bilayer curvature. OPA1 dimerization through the paddle region, which inserts into cardiolipin-containing membrane, promotes GTP hydrolysis and the helical assembly of a flexible OPA1 lattice on the membrane, which drives membrane curvature and mitochondrial fusion. Excess levels of S-OPA1 produced by cleavage by OMA1 following stress conditions that induce loss of mitochondrial membrane potential, lead to an impaired equilibrium between L-OPA1 and S-OPA1, thereby inhibiting mitochondrial fusion. Plays a role in the maintenance and remodeling of mitochondrial cristae, some invaginations of the mitochondrial inner membrane that provide an increase in the surface area. Probably acts by forming helical filaments at the inside of inner membrane tubes with the shape and dimensions of crista junctions. In Oncorhynchus masou (Cherry salmon), this protein is Dynamin-like GTPase OPA1, mitochondrial (opa1).